Here is a 271-residue protein sequence, read N- to C-terminus: Imidazole glycerol phosphate synthase subunit HisF (271 aa).

Catalysis depends on residues aspartate 12 and aspartate 136.

This sequence belongs to the HisA/HisF family. In terms of assembly, heterodimer of HisH and HisF.

The protein localises to the cytoplasm. It catalyses the reaction 5-[(5-phospho-1-deoxy-D-ribulos-1-ylimino)methylamino]-1-(5-phospho-beta-D-ribosyl)imidazole-4-carboxamide + L-glutamine = D-erythro-1-(imidazol-4-yl)glycerol 3-phosphate + 5-amino-1-(5-phospho-beta-D-ribosyl)imidazole-4-carboxamide + L-glutamate + H(+). It participates in amino-acid biosynthesis; L-histidine biosynthesis; L-histidine from 5-phospho-alpha-D-ribose 1-diphosphate: step 5/9. IGPS catalyzes the conversion of PRFAR and glutamine to IGP, AICAR and glutamate. The HisF subunit catalyzes the cyclization activity that produces IGP and AICAR from PRFAR using the ammonia provided by the HisH subunit. This chain is Imidazole glycerol phosphate synthase subunit HisF, found in Natronomonas pharaonis (strain ATCC 35678 / DSM 2160 / CIP 103997 / JCM 8858 / NBRC 14720 / NCIMB 2260 / Gabara) (Halobacterium pharaonis).